Consider the following 101-residue polypeptide: DNA-binding protein Fis (101 aa).

Residues 77–96 (QTRAANMLGINRGTLRKKLK) constitute a DNA-binding region (H-T-H motif).

It belongs to the transcriptional regulatory Fis family. Homodimer.

Activates ribosomal RNA transcription. Plays a direct role in upstream activation of rRNA promoters. The protein is DNA-binding protein Fis of Shewanella amazonensis (strain ATCC BAA-1098 / SB2B).